The primary structure comprises 169 residues: Regulator of ribonuclease activity A (169 aa).

This sequence belongs to the RraA family. As to quaternary structure, homotrimer. Binds to both RNA-binding sites in the C-terminal region of Rne and to RhlB.

It is found in the cytoplasm. In terms of biological role, globally modulates RNA abundance by binding to RNase E (Rne) and regulating its endonucleolytic activity. Can modulate Rne action in a substrate-dependent manner by altering the composition of the degradosome. Modulates RNA-binding and helicase activities of the degradosome. This Photorhabdus laumondii subsp. laumondii (strain DSM 15139 / CIP 105565 / TT01) (Photorhabdus luminescens subsp. laumondii) protein is Regulator of ribonuclease activity A.